A 152-amino-acid chain; its full sequence is Holo-[acyl-carrier-protein] synthase (152 aa).

Mg(2+)-binding residues include D7 and E60.

It belongs to the P-Pant transferase superfamily. AcpS family. Mg(2+) serves as cofactor.

The protein resides in the cytoplasm. The enzyme catalyses apo-[ACP] + CoA = holo-[ACP] + adenosine 3',5'-bisphosphate + H(+). Functionally, transfers the 4'-phosphopantetheine moiety from coenzyme A to a Ser of acyl-carrier-protein. The sequence is that of Holo-[acyl-carrier-protein] synthase from Bifidobacterium adolescentis (strain ATCC 15703 / DSM 20083 / NCTC 11814 / E194a).